Here is a 428-residue protein sequence, read N- to C-terminus: Phosphomethylpyrimidine synthase 2 (428 aa).

Substrate is bound by residues Asn-65, Met-94, Tyr-123, His-158, 180–182, 221–224, and Glu-260; these read SRG and DGMR. His-264 contributes to the Zn(2+) binding site. Residue Tyr-287 participates in substrate binding. Residue His-328 participates in Zn(2+) binding. 3 residues coordinate [4Fe-4S] cluster: Cys-405, Cys-408, and Cys-412.

It belongs to the ThiC family. The cofactor is [4Fe-4S] cluster.

It catalyses the reaction 5-amino-1-(5-phospho-beta-D-ribosyl)imidazole + S-adenosyl-L-methionine = 4-amino-2-methyl-5-(phosphooxymethyl)pyrimidine + CO + 5'-deoxyadenosine + formate + L-methionine + 3 H(+). Its pathway is cofactor biosynthesis; thiamine diphosphate biosynthesis. Its function is as follows. Catalyzes the synthesis of the hydroxymethylpyrimidine phosphate (HMP-P) moiety of thiamine from aminoimidazole ribotide (AIR) in a radical S-adenosyl-L-methionine (SAM)-dependent reaction. The protein is Phosphomethylpyrimidine synthase 2 of Methanosarcina barkeri (strain Fusaro / DSM 804).